The primary structure comprises 503 residues: Cytochrome P450 11B1, mitochondrial (503 aa).

Residues 1-24 constitute a mitochondrion transit peptide; sequence MAIWAKAEAWLAGPWLALNRARTL. Residue C450 coordinates heme.

Belongs to the cytochrome P450 family. The cofactor is heme.

The protein resides in the mitochondrion inner membrane. The enzyme catalyses a steroid + 2 reduced [adrenodoxin] + O2 + 2 H(+) = an 11beta-hydroxysteroid + 2 oxidized [adrenodoxin] + H2O. It catalyses the reaction 11-deoxycortisol + 2 reduced [adrenodoxin] + O2 + 2 H(+) = cortisol + 2 oxidized [adrenodoxin] + H2O. It carries out the reaction 21-hydroxyprogesterone + 2 reduced [adrenodoxin] + O2 + 2 H(+) = corticosterone + 2 oxidized [adrenodoxin] + H2O. The catalysed reaction is corticosterone + 2 reduced [adrenodoxin] + O2 + 2 H(+) = 18-hydroxycorticosterone + 2 oxidized [adrenodoxin] + H2O. The enzyme catalyses 18-hydroxycorticosterone + 2 reduced [adrenodoxin] + O2 + 2 H(+) = aldosterone + 2 oxidized [adrenodoxin] + 2 H2O. It catalyses the reaction 21-hydroxyprogesterone + 2 reduced [adrenodoxin] + O2 + 2 H(+) = 19-hydroxy-11-deoxycorticosterone + 2 oxidized [adrenodoxin] + H2O. It carries out the reaction 19-hydroxy-11-deoxycorticosterone + 2 reduced [adrenodoxin] + O2 + 2 H(+) = 19-oxo-11-deoxycorticosterone + 2 oxidized [adrenodoxin] + 2 H2O. Its pathway is steroid biosynthesis; glucocorticoid biosynthesis. The protein operates within steroid hormone biosynthesis. A cytochrome P450 monooxygenase that catalyzes the biosynthesis of aldosterone and other adrenal corticoids. Differing from other species (such as human, rat and mice), it is able to catalyze three sequential oxidative reactions of 11-deoxycorticosterone (21-hydroxyprogesterone), namely 11-beta hydroxylation, followed by two successive oxidations at C18 yielding 18-hydroxy and then 18-oxo intermediates, and ending with the formation of aldosterone. Steroid 11beta, 18- and 19-hydroxylase. Mechanistically, uses molecular oxygen inserting one oxygen atom into a substrate and reducing the second into a water molecule. Two electrons are provided by NADPH via a two-protein mitochondrial transfer system comprising flavoprotein FDXR (adrenodoxin/ferredoxin reductase) and nonheme iron-sulfur protein FDX1 or FDX2 (adrenodoxin/ferredoxin). The sequence is that of Cytochrome P450 11B1, mitochondrial (CYP11B1) from Sus scrofa (Pig).